Consider the following 921-residue polypeptide: Isoleucine--tRNA ligase 1 (921 aa).

Positions 57 to 67 match the 'HIGH' region motif; sequence PYANGDIHMGH. Residue Glu-552 coordinates L-isoleucyl-5'-AMP. The short motif at 593–597 is the 'KMSKS' region element; the sequence is KMSKS. ATP is bound at residue Lys-596. Zn(2+) is bound by residues Cys-888, Cys-891, Cys-908, and Cys-911.

This sequence belongs to the class-I aminoacyl-tRNA synthetase family. IleS type 1 subfamily. Monomer. Zn(2+) serves as cofactor.

It localises to the cytoplasm. It catalyses the reaction tRNA(Ile) + L-isoleucine + ATP = L-isoleucyl-tRNA(Ile) + AMP + diphosphate. Catalyzes the attachment of isoleucine to tRNA(Ile). As IleRS can inadvertently accommodate and process structurally similar amino acids such as valine, to avoid such errors it has two additional distinct tRNA(Ile)-dependent editing activities. One activity is designated as 'pretransfer' editing and involves the hydrolysis of activated Val-AMP. The other activity is designated 'posttransfer' editing and involves deacylation of mischarged Val-tRNA(Ile). This chain is Isoleucine--tRNA ligase 1, found in Bacillus cereus (strain ZK / E33L).